Consider the following 855-residue polypeptide: Leucine--tRNA ligase (855 aa).

Positions 45 to 55 match the 'HIGH' region motif; it reads PYPSGRLHMGH. A 'KMSKS' region motif is present at residues 619-623; that stretch reads KMSKS. K622 is an ATP binding site.

The protein belongs to the class-I aminoacyl-tRNA synthetase family.

It localises to the cytoplasm. It carries out the reaction tRNA(Leu) + L-leucine + ATP = L-leucyl-tRNA(Leu) + AMP + diphosphate. The sequence is that of Leucine--tRNA ligase from Hyphomonas neptunium (strain ATCC 15444).